A 425-amino-acid polypeptide reads, in one-letter code: Protein upregulated in glial subsets pugs-5 (425 aa).

The span at 355–373 shows a compositional bias: basic and acidic residues; it reads NNNDVEKSTQIEKKPEKQG. Residues 355 to 407 are disordered; that stretch reads NNNDVEKSTQIEKKPEKQGPEIQEEVVEMETVKDEQPPKTSAVRFKENSPRLM.

This Caenorhabditis elegans protein is Protein upregulated in glial subsets pugs-5.